Here is a 130-residue protein sequence, read N- to C-terminus: Ribosome-binding factor A (130 aa).

It belongs to the RbfA family. In terms of assembly, monomer. Binds 30S ribosomal subunits, but not 50S ribosomal subunits or 70S ribosomes.

It localises to the cytoplasm. Its function is as follows. One of several proteins that assist in the late maturation steps of the functional core of the 30S ribosomal subunit. Associates with free 30S ribosomal subunits (but not with 30S subunits that are part of 70S ribosomes or polysomes). Required for efficient processing of 16S rRNA. May interact with the 5'-terminal helix region of 16S rRNA. In Alkalilimnicola ehrlichii (strain ATCC BAA-1101 / DSM 17681 / MLHE-1), this protein is Ribosome-binding factor A.